The following is a 264-amino-acid chain: Thiazole synthase (264 aa).

Lysine 101 serves as the catalytic Schiff-base intermediate with DXP. 1-deoxy-D-xylulose 5-phosphate contacts are provided by residues glycine 162, alanine 188–glycine 189, and asparagine 210–threonine 211.

It belongs to the ThiG family. As to quaternary structure, homotetramer. Forms heterodimers with either ThiH or ThiS.

The protein resides in the cytoplasm. The catalysed reaction is [ThiS sulfur-carrier protein]-C-terminal-Gly-aminoethanethioate + 2-iminoacetate + 1-deoxy-D-xylulose 5-phosphate = [ThiS sulfur-carrier protein]-C-terminal Gly-Gly + 2-[(2R,5Z)-2-carboxy-4-methylthiazol-5(2H)-ylidene]ethyl phosphate + 2 H2O + H(+). Its pathway is cofactor biosynthesis; thiamine diphosphate biosynthesis. In terms of biological role, catalyzes the rearrangement of 1-deoxy-D-xylulose 5-phosphate (DXP) to produce the thiazole phosphate moiety of thiamine. Sulfur is provided by the thiocarboxylate moiety of the carrier protein ThiS. In vitro, sulfur can be provided by H(2)S. The sequence is that of Thiazole synthase from Chromobacterium violaceum (strain ATCC 12472 / DSM 30191 / JCM 1249 / CCUG 213 / NBRC 12614 / NCIMB 9131 / NCTC 9757 / MK).